The primary structure comprises 138 residues: Basic phospholipase A2 PLA-N (138 aa).

A signal peptide spans 1–16; the sequence is MRTLWIMAVLLVGVEG. 7 disulfides stabilise this stretch: cysteine 42/cysteine 131, cysteine 44/cysteine 60, cysteine 59/cysteine 111, cysteine 65/cysteine 138, cysteine 66/cysteine 104, cysteine 73/cysteine 97, and cysteine 91/cysteine 102. Residues tyrosine 43, glycine 45, and glycine 47 each contribute to the Ca(2+) site. Residue histidine 63 is part of the active site. Residue aspartate 64 participates in Ca(2+) binding. Residue aspartate 105 is part of the active site.

It belongs to the phospholipase A2 family. Group II subfamily. D49 sub-subfamily. Ca(2+) is required as a cofactor. Expressed by the venom gland.

The protein localises to the secreted. The enzyme catalyses a 1,2-diacyl-sn-glycero-3-phosphocholine + H2O = a 1-acyl-sn-glycero-3-phosphocholine + a fatty acid + H(+). Its function is as follows. Snake venom phospholipase A2 (PLA2) that displays edema-inducing activities, as well as presynaptic neurotoxicity and myotoxicity. PLA2 catalyzes the calcium-dependent hydrolysis of the 2-acyl groups in 3-sn-phosphoglycerides. The polypeptide is Basic phospholipase A2 PLA-N (Protobothrops flavoviridis (Habu)).